A 70-amino-acid chain; its full sequence is Protein tam14 (70 aa).

Over residues 1-19 (MPTVQTPSQRRANTQFQKN) the composition is skewed to polar residues. The segment at 1 to 20 (MPTVQTPSQRRANTQFQKNI) is disordered. A helical membrane pass occupies residues 45-65 (IAMFFILLMSGGIILGILRFL).

This sequence belongs to the RAMP4 family.

It is found in the membrane. The protein resides in the endoplasmic reticulum membrane. Functionally, interacts with target proteins during their translocation into the lumen of the endoplasmic reticulum. Protects unfolded target proteins against degradation during ER stress. May facilitate glycosylation of target proteins after termination of ER stress. The protein is Protein tam14 (tam14) of Schizosaccharomyces pombe (strain 972 / ATCC 24843) (Fission yeast).